The chain runs to 287 residues: Spermidine/putrescine transport system permease protein PotB (287 aa).

The Cytoplasmic portion of the chain corresponds to 1 to 10; that stretch reads MKNTSKFQNV. The chain crosses the membrane as a helical span at residues 11–31; it reads VIVTIVGWLVLFVFLPNLMII. Over 32–70 the chain is Periplasmic; the sequence is GTSFLTRDDASFVKMVFTLDNYARLLDPLYFEVLLHSLN. The region spanning 65–271 is the ABC transmembrane type-1 domain; sequence LLHSLNMALI…IVMGLMLLIY (207 aa). Residues 71 to 91 form a helical membrane-spanning segment; sequence MALIATLSCLVLGYPFAWFLA. Topologically, residues 92–99 are cytoplasmic; the sequence is KLPEKIRP. A helical membrane pass occupies residues 100–120; sequence LLLFLLIVPFWTNSLIRIYGL. The Periplasmic segment spans residues 121–145; that stretch reads KIFLSTKGYLNEFLLWLGVIDTPIR. Residues 146–166 form a helical membrane-spanning segment; the sequence is IMFTPSAVIIGLVYILLPFMV. Residues 167 to 197 lie on the Cytoplasmic side of the membrane; the sequence is MPLYSSIEKLDKPLLEAARDLGASKMQTFIR. Residues 198 to 218 form a helical membrane-spanning segment; it reads IIIPLTMPGIVAGCLLVMLPA. The Periplasmic portion of the chain corresponds to 219–251; that stretch reads MGLFYVSDLMGGAKNLLIGNVIKVQFLNIRDWP. A helical transmembrane segment spans residues 252–272; it reads FGAATSITLTIVMGLMLLIYW. Topologically, residues 273–287 are cytoplasmic; it reads RASRLLNKKVSDISD.

It belongs to the binding-protein-dependent transport system permease family. CysTW subfamily.

It localises to the cell inner membrane. Required for the activity of the bacterial periplasmic transport system of putrescine and spermidine. This is Spermidine/putrescine transport system permease protein PotB (potB) from Salmonella typhi.